A 117-amino-acid polypeptide reads, in one-letter code: Immunoglobulin heavy variable 4-38-2 (117 aa).

Residues 1-19 (MKHLWFFLLLVAAPRWVLS) form the signal peptide. The tract at residues 20–44 (QVQLQESGPGLVKPSETLSLTCTVS) is framework-1. One can recognise an Ig-like domain in the interval 20–117 (QVQLQESGPG…ADTAVYYCAR (98 aa)). Cysteine 41 and cysteine 115 form a disulfide bridge. Positions 45–53 (GYSISSGYY) are complementarity-determining-1. Positions 54–70 (WGWIRQPPGKGLEWIGS) are framework-2. Residues 71 to 77 (IYHSGST) form a complementarity-determining-2 region. Residues 78-115 (YYNPSLKSRVTISVDTSKNQFSLKLSSVTAADTAVYYC) are framework-3. Residues 116–117 (AR) are complementarity-determining-3.

Immunoglobulins are composed of two identical heavy chains and two identical light chains; disulfide-linked.

It localises to the secreted. Its subcellular location is the cell membrane. Functionally, v region of the variable domain of immunoglobulin heavy chains that participates in the antigen recognition. Immunoglobulins, also known as antibodies, are membrane-bound or secreted glycoproteins produced by B lymphocytes. In the recognition phase of humoral immunity, the membrane-bound immunoglobulins serve as receptors which, upon binding of a specific antigen, trigger the clonal expansion and differentiation of B lymphocytes into immunoglobulins-secreting plasma cells. Secreted immunoglobulins mediate the effector phase of humoral immunity, which results in the elimination of bound antigens. The antigen binding site is formed by the variable domain of one heavy chain, together with that of its associated light chain. Thus, each immunoglobulin has two antigen binding sites with remarkable affinity for a particular antigen. The variable domains are assembled by a process called V-(D)-J rearrangement and can then be subjected to somatic hypermutations which, after exposure to antigen and selection, allow affinity maturation for a particular antigen. This Homo sapiens (Human) protein is Immunoglobulin heavy variable 4-38-2.